Here is an 89-residue protein sequence, read N- to C-terminus: Small ribosomal subunit protein uS17 (89 aa).

It belongs to the universal ribosomal protein uS17 family. In terms of assembly, part of the 30S ribosomal subunit.

Its function is as follows. One of the primary rRNA binding proteins, it binds specifically to the 5'-end of 16S ribosomal RNA. The polypeptide is Small ribosomal subunit protein uS17 (Delftia acidovorans (strain DSM 14801 / SPH-1)).